Consider the following 459-residue polypeptide: Cysteine--tRNA ligase (459 aa).

Position 28 (cysteine 28) interacts with Zn(2+). Residues 30–40 (VTVYDLCHFGH) carry the 'HIGH' region motif. Residues cysteine 209, histidine 234, and glutamate 238 each coordinate Zn(2+). A 'KMSKS' region motif is present at residues 266–270 (KMSKS). An ATP-binding site is contributed by lysine 269.

Belongs to the class-I aminoacyl-tRNA synthetase family. In terms of assembly, monomer. The cofactor is Zn(2+).

Its subcellular location is the cytoplasm. It carries out the reaction tRNA(Cys) + L-cysteine + ATP = L-cysteinyl-tRNA(Cys) + AMP + diphosphate. In Actinobacillus pleuropneumoniae serotype 3 (strain JL03), this protein is Cysteine--tRNA ligase.